A 489-amino-acid polypeptide reads, in one-letter code: MINVKVLRFEPGVDEKPHLESYDIPSKEKMKVLDALQLINKMYNANIAFRSSCRAGQCGSCAVKMNGEVVLACRAEVEDGAVIEPVDLPVIKDLMVDRSEIEDKVRAMGLYLQSEARGIQRIKPEDYQDTKKLRGCIECFSCISSCPVIKESTEYAGPYFMRYISKFAFDPRDEAERAAGGVEEGLYCCTTCGKCAEVCPKELNVPGDAIEKLRAMACREGAGPLDAHRKIKKLISETGRSVDHIGKGFIESVGQNPGSRIGFFTGCLVDYRMPDVGMALLRVLREHGFEVDVPDGQVCCGSPMIRTGQLDIVEDLVERNRRALEGYDTIITVCAGCGATLKKDYPRYGVELNVLDISEFLADRIDDIKMKPVNMRVTYHDPCHLLRGQGVKLEPRKILNSIPGLEFVEMEKQGQCCGSGGGVKSGKPEIAESLGKKKAEMIRKLNVDAVITICPFCQLHIKDSLEKEGLGDVKVMNILELLDMAYSDD.

Residues 2–89 (INVKVLRFEP…GAVIEPVDLP (88 aa)) enclose the 2Fe-2S ferredoxin-type domain. Positions 53, 58, 61, and 73 each coordinate [2Fe-2S] cluster. 4Fe-4S ferredoxin-type domains are found at residues 124-158 (PEDY…YAGP) and 178-209 (AAGG…PGDA). Residues Cys-136, Cys-139, Cys-142, Cys-146, Cys-189, Cys-192, Cys-195, and Cys-199 each coordinate [4Fe-4S] cluster.

Subunit B of the heterodimeric fumarate reductase of methanogenic Archaea, composed of subunits A (TfrA) and B (TfrB). [2Fe-2S] cluster serves as cofactor. [4Fe-4S] cluster is required as a cofactor.

Its subcellular location is the cytoplasm. The enzyme catalyses coenzyme B + coenzyme M + fumarate = coenzyme M-coenzyme B heterodisulfide + succinate. Its function is as follows. Catalyzes the reduction of fumarate with reduced coenzyme M (CoM-S-H) and coenzyme B (CoB-S-H). In vitro, is able to reduces fumarate with reduced benzyl viologen, oxidize CoM-S-H and CoB-S-H to CoM-S-S-CoB with methylene blue, and reduce CoM-S-S-CoB with reduced benzyl viologen. The enzyme has specificity for the two thiol compounds as the CoB--CoM heterodisulfide reductase. The enzyme is very sensitive to oxygen. In Methanothermobacter marburgensis (strain ATCC BAA-927 / DSM 2133 / JCM 14651 / NBRC 100331 / OCM 82 / Marburg) (Methanobacterium thermoautotrophicum), this protein is Fumarate reductase (CoM/CoB) subunit B.